Reading from the N-terminus, the 81-residue chain is Protein GPR15LG (81 aa).

Positions 1 to 24 (MRFLALTSLLCILLLCLSFFSAEG) are cleaved as a signal peptide. 2 disulfides stabilise this stretch: Cys-40/Cys-63 and Cys-41/Cys-60.

Interacts with SUSD2; the interaction is direct.

Its subcellular location is the secreted. In terms of biological role, highly cationic protein that has multiple functions. Acts as a chemotactic factor that mediates lymphocytes recruitment to epithelia through binding and activation of the G-protein coupled receptor GPR15. May be a tumor suppressor; together with SUSD2 has a growth inhibitory effect on colon cancer cells which includes G1 cell cycle arrest. May regulate keratinocyte proliferation. In addition, through activation of Mas-related G protein-coupled receptors (MRGPRs) contributes to pruritogenesis by activating itch-selective sensory neurons and mast cells degranulation. Functionally, has antimicrobial activity against Gram-positive bacteria, including Staphylococcus aureus and Actinomyces spec., and Mycoplasma hominis and lentivirus. The chain is Protein GPR15LG (GPR15LG) from Sus scrofa (Pig).